Reading from the N-terminus, the 275-residue chain is Large ribosomal subunit protein uL2 (275 aa).

Disordered regions lie at residues 24-54 (LYKG…VRHQ) and 223-275 (VAMN…RHKR). Basic and acidic residues-rich tracts occupy residues 25 to 38 (YKGR…EKKT) and 229 to 241 (DHPH…RTGE).

Belongs to the universal ribosomal protein uL2 family. As to quaternary structure, part of the 50S ribosomal subunit. Forms a bridge to the 30S subunit in the 70S ribosome.

In terms of biological role, one of the primary rRNA binding proteins. Required for association of the 30S and 50S subunits to form the 70S ribosome, for tRNA binding and peptide bond formation. It has been suggested to have peptidyltransferase activity; this is somewhat controversial. Makes several contacts with the 16S rRNA in the 70S ribosome. The protein is Large ribosomal subunit protein uL2 of Azoarcus sp. (strain BH72).